Reading from the N-terminus, the 125-residue chain is Fumarate reductase subunit D (125 aa).

3 consecutive transmembrane segments (helical) span residues 30–50 (FAMI…MGVI), 60–80 (VVSF…LALP), and 105–125 (IACY…IFML).

The protein belongs to the FrdD family. As to quaternary structure, part of an enzyme complex containing four subunits: a flavoprotein (FrdA), an iron-sulfur protein (FrdB), and two hydrophobic anchor proteins (FrdC and FrdD).

The protein localises to the cell inner membrane. Functionally, anchors the catalytic components of the fumarate reductase complex to the cell membrane, binds quinones. This Vibrio vulnificus (strain YJ016) protein is Fumarate reductase subunit D.